The primary structure comprises 147 residues: Secreted hemophore CSA2 (147 aa).

The signal sequence occupies residues 1 to 20 (MKFSTILAIPFAIAFANAAA). A CFEM domain is found at 34–145 (NPYTIYPPVP…SALDAAATAT (112 aa)). Intrachain disulfides connect Cys-62–Cys-102, Cys-66–Cys-97, Cys-76–Cys-83, and Cys-85–Cys-118. Asp-80 is a heme binding site.

It belongs to the RBT5 family. Homodimer. The possibility of a transient honotrimer assembly of the holo protein is not ruled out.

Its subcellular location is the secreted. Secreted heme-binding protein involved in the utilization of iron from human hemoglobin during hyphal growth. May also play a role in non-hemoglobin iron utilization. Heme transfer occurs between PGA7, RBT5 and CSA2 supporting a model in which the 3 CFEM proteins cooperate in a heme-acquisition system and form a cross-cell wall heme-transfer cascade. The ability to acquire iron from host tissues is a major virulence factor of pathogenic microorganisms. The chain is Secreted hemophore CSA2 (CSA2) from Candida albicans (strain SC5314 / ATCC MYA-2876) (Yeast).